The primary structure comprises 674 residues: MATDTPPQLAGPPTPAMETLDRDVVMSPRKRRRLSASAEPELTEPESDGTSGGRGAAAEAPETAALEPKSLFNSTSTESSITSSSTTTTTTSSSSSIAPFLAKHIRDQHASRNRFAPADSSLPRRKADSKYCYRHRPDLKCRRQADEPTVDQMQRDLSTLSQNDQQSIAHFWSLFSAAPSKHRNLMLQGIVAQCCFPQLSFLSASVRDLIRIDFVTALPPEISFKILSYLDTASLCNAAQVSRNWRHLADDDVVWHRMCEQHIDRKCEKCGWGLPMLDRKRLKDTKRQVQLRAAGKEAVTGRQQQQHRPWKAVYMDRFKVGTNWKYGRCTTTIFRGHTNGVMCLQFDDNILATGSYDATIKIWDIETGKEIRTLRGHESTIRCLQFDDTKLISGSLDRTIKVWSWRSGECISTYTGHQGGVLCLHFDSTTLASGSKDNTIKIWNFQDKSTQILRGHTDWVNAVKLDTASRTVFSASDDLTVRIWDLDTGKCIHTYAGHVGQVQQVLPLPREFEFKHTSHCDDDRSDRLSGSESPDHRASHDSNHAPDLPTTSAPPTQPMSPLFEALFNEDRPAPPRYMLTAALDSTLRLWEVHTGRCLRTFFGHIEGVWGLAADTLRLVSGAQDHMTKVWDPRTGTCERTFTGHRGPVTCVSLSDSRMATGSEDCEVRMYSFKA.

A disordered region spans residues 1–96; the sequence is MATDTPPQLA…TTTTTSSSSS (96 aa). Over residues 56–96 the composition is skewed to low complexity; it reads AAAEAPETAALEPKSLFNSTSTESSITSSSTTTTTTSSSSS. Positions 212–258 constitute an F-box domain; that stretch reads IDFVTALPPEISFKILSYLDTASLCNAAQVSRNWRHLADDDVVWHRM. 4 WD repeats span residues 336–375, 377–415, 416–453, and 455–496; these read GHTN…RTLR, HEST…STYT, GHQG…TQIL, and GHTD…HTYA. The span at 518–544 shows a compositional bias: basic and acidic residues; that stretch reads SHCDDDRSDRLSGSESPDHRASHDSNH. The segment at 518-561 is disordered; that stretch reads SHCDDDRSDRLSGSESPDHRASHDSNHAPDLPTTSAPPTQPMSP. WD repeat units lie at residues 557–600, 603–640, and 643–674; these read QPMS…CLRT, GHIE…CERT, and GHRG…SFKA.

The protein belongs to the WD repeat MET30/SCONB/SCON-2 family. Component of the SCF(sconB) E3 ubiquitin ligase complex.

It functions in the pathway protein modification; protein ubiquitination. In terms of biological role, component of the SCF(sconB) E3 ubiquitin ligase complex involved in the regulation of sulfur metabolite repression, probably by mediating the inactivation or degradation of the metR transcription factor. The polypeptide is Probable E3 ubiquitin ligase complex SCF subunit sconB (sconB) (Arthroderma otae (strain ATCC MYA-4605 / CBS 113480) (Microsporum canis)).